The following is a 245-amino-acid chain: Ribonuclease 3 (245 aa).

The RNase III domain maps to 18–146 (LSEFLENLSI…FVGAIYLDSG (129 aa)). Glu59 contacts Mg(2+). Asp63 is a catalytic residue. 2 residues coordinate Mg(2+): Asp132 and Glu135. Glu135 is a catalytic residue. A DRBM domain is found at 173–242 (DYKSLLQEYV…AEVALKAMED (70 aa)).

This sequence belongs to the ribonuclease III family. In terms of assembly, homodimer. It depends on Mg(2+) as a cofactor.

Its subcellular location is the cytoplasm. The catalysed reaction is Endonucleolytic cleavage to 5'-phosphomonoester.. In terms of biological role, digests double-stranded RNA. Involved in the processing of primary rRNA transcript to yield the immediate precursors to the large and small rRNAs (23S and 16S). Processes some mRNAs, and tRNAs when they are encoded in the rRNA operon. Processes pre-crRNA and tracrRNA of type II CRISPR loci if present in the organism. The protein is Ribonuclease 3 of Borreliella afzelii (strain PKo) (Borrelia afzelii).